A 375-amino-acid polypeptide reads, in one-letter code: MFISEIQLKNYRNYEKLELSFEDKVNVIIGENAQGKTNLMEAIYVLAMAKSHRTSNDRELIRWDEEFGQIKGKLQKRNSSLSLELNISKKGKKAKLNQLEQQKLSQYIGVMNVVMFAPEDLNLVKGSPQVRRRFLDMELGQIAPIYLYELSQYQKVLTQRNHLLKKMQGNSKNEETMLDVFTLQLIEHGAKILQKRFEFLHLLQEWAAPIHRGISRGLEELEIVYKPSVDVSESMDLSKIKEVYYESFQSVKQREIFRGTTLIGPHRDDLQFFVNSKNVQVFGSQGQQRTTALSLKLAEIELIYSEVKEYPILLLDDVLSELDDYRQSHLLNTIQGKVQTFVTTTSVDGIEHETLKDAKTIHVTNGTVDCEIDRA.

30–37 contacts ATP; sequence GENAQGKT.

This sequence belongs to the RecF family.

It is found in the cytoplasm. The RecF protein is involved in DNA metabolism; it is required for DNA replication and normal SOS inducibility. RecF binds preferentially to single-stranded, linear DNA. It also seems to bind ATP. The polypeptide is DNA replication and repair protein RecF (Bacillus cereus (strain G9842)).